A 147-amino-acid polypeptide reads, in one-letter code: Molybdopterin synthase catalytic subunit 1 (147 aa).

Substrate is bound by residues 43 to 45 (NVR), 109 to 110 (HR), Lys125, and 132 to 134 (KKE).

The protein belongs to the MoaE family. In terms of assembly, heterotetramer of 2 MoaD subunits and 2 MoaE subunits. Also stable as homodimer. The enzyme changes between these two forms during catalysis.

It catalyses the reaction 2 [molybdopterin-synthase sulfur-carrier protein]-C-terminal-Gly-aminoethanethioate + cyclic pyranopterin phosphate + H2O = molybdopterin + 2 [molybdopterin-synthase sulfur-carrier protein]-C-terminal Gly-Gly + 2 H(+). It functions in the pathway cofactor biosynthesis; molybdopterin biosynthesis. Functionally, converts molybdopterin precursor Z into molybdopterin. This requires the incorporation of two sulfur atoms into precursor Z to generate a dithiolene group. The sulfur is provided by MoaD. This chain is Molybdopterin synthase catalytic subunit 1 (moaE1), found in Mycobacterium tuberculosis (strain ATCC 25618 / H37Rv).